A 315-amino-acid polypeptide reads, in one-letter code: Olfactory receptor 4K3 (315 aa).

Over 1 to 25 (MAWSNQSAVTEFILRGLSSSLELQI) the chain is Extracellular. The N-linked (GlcNAc...) asparagine glycan is linked to N5. A helical transmembrane segment spans residues 26–49 (FYFLFFSIVYAATVLGNLLIVVTI). Over 50 to 57 (ASEPHLHS) the chain is Cytoplasmic. Residues 58 to 79 (PMYFLLGNLSFIDMSLASFATP) traverse the membrane as a helical segment. The Extracellular segment spans residues 80 to 100 (KMIADFLREHKAISFEGCMTQ). Residues C97 and C189 are joined by a disulfide bond. Residues 101–120 (MFFLHLLGGAEIVLLISMSF) traverse the membrane as a helical segment. At 121–139 (DRYVAICKPLHYLTIMSRR) the chain is on the cytoplasmic side. The helical transmembrane segment at 140–158 (MCVGLVILSWIVGIFHALS) threads the bilayer. Residues 159–195 (QLAFTVNLPFCGPNEVDSFFCDLPLVIKLACVDTYIL) lie on the Extracellular side of the membrane. A helical transmembrane segment spans residues 196–219 (GVFMISTSGMIALVCFILLVISYT). At 220 to 235 (IILVTVRQRSSGGSSK) the chain is on the cytoplasmic side. Residues 236–258 (ALSTCSAHFTVVTLFFGPCTFIY) form a helical membrane-spanning segment. Topologically, residues 259 to 269 (VWPFTNFPIDK) are extracellular. A helical transmembrane segment spans residues 270 to 289 (VLSVFYTIYTPLLNPVIYTV). The Cytoplasmic portion of the chain corresponds to 290–315 (RNKDVKYSMRKLSSHIFKSRKTDHTP).

It belongs to the G-protein coupled receptor 1 family.

The protein resides in the cell membrane. Its function is as follows. Odorant receptor. The sequence is that of Olfactory receptor 4K3 (OR4K3) from Homo sapiens (Human).